The primary structure comprises 219 residues: Deoxyribose-phosphate aldolase (219 aa).

D92 functions as the Proton donor/acceptor in the catalytic mechanism. The active-site Schiff-base intermediate with acetaldehyde is K154. K183 serves as the catalytic Proton donor/acceptor.

It belongs to the DeoC/FbaB aldolase family. DeoC type 1 subfamily.

The protein resides in the cytoplasm. The catalysed reaction is 2-deoxy-D-ribose 5-phosphate = D-glyceraldehyde 3-phosphate + acetaldehyde. The protein operates within carbohydrate degradation; 2-deoxy-D-ribose 1-phosphate degradation; D-glyceraldehyde 3-phosphate and acetaldehyde from 2-deoxy-alpha-D-ribose 1-phosphate: step 2/2. Catalyzes a reversible aldol reaction between acetaldehyde and D-glyceraldehyde 3-phosphate to generate 2-deoxy-D-ribose 5-phosphate. The chain is Deoxyribose-phosphate aldolase from Dictyoglomus turgidum (strain DSM 6724 / Z-1310).